A 179-amino-acid polypeptide reads, in one-letter code: Cytochrome b6-f complex iron-sulfur subunit 1 (179 aa).

A helical membrane pass occupies residues 21–43 (LLTFGTVTGVALGALYPVVNYFI). The region spanning 61 to 162 (GNDVSVSKFL…AKTENDKIVL (102 aa)) is the Rieske domain. Residues Cys108, His110, Cys126, and His129 each contribute to the [2Fe-2S] cluster site. Cys113 and Cys128 form a disulfide bridge.

Belongs to the Rieske iron-sulfur protein family. In terms of assembly, the 4 large subunits of the cytochrome b6-f complex are cytochrome b6, subunit IV (17 kDa polypeptide, PetD), cytochrome f and the Rieske protein, while the 4 small subunits are PetG, PetL, PetM and PetN. The complex functions as a dimer. The cofactor is [2Fe-2S] cluster.

Its subcellular location is the cellular thylakoid membrane. It carries out the reaction 2 oxidized [plastocyanin] + a plastoquinol + 2 H(+)(in) = 2 reduced [plastocyanin] + a plastoquinone + 4 H(+)(out). Its function is as follows. Component of the cytochrome b6-f complex, which mediates electron transfer between photosystem II (PSII) and photosystem I (PSI), cyclic electron flow around PSI, and state transitions. This is Cytochrome b6-f complex iron-sulfur subunit 1 from Nostoc sp. (strain PCC 7120 / SAG 25.82 / UTEX 2576).